A 567-amino-acid chain; its full sequence is Vacuolar fusion protein MON1 homolog (567 aa).

Disordered regions lie at residues 1–52 (MDMD…DDEG) and 65–129 (TSAS…DDTS). Positions 7-19 (TNNPSPPGPPDSP) are enriched in pro residues. Over residues 43 to 52 (DDYDDDDDEG) the composition is skewed to acidic residues.

It belongs to the MON1/SAND family. Interacts with CCZ1A, CCZ1B and RABF2B.

The protein resides in the endosome. The protein localises to the prevacuolar compartment. Its function is as follows. Plays an important role in membrane trafficking through the secretory apparatus. In complex with CCZ1, acts as a guanine exchange factor (GEF) for Rab7 protein family. Promotes the exchange of GDP to GTP, converting it from an inactive GDP-bound form into an active GTP-bound form. The active form is involved in protein trafficking from prevacuolar compartments (PVCs) to vacuoles. May serve as a linker between Rab5 and Rab7 protein families in PVCs and mediate PVC maturation. The chain is Vacuolar fusion protein MON1 homolog from Oryza sativa subsp. japonica (Rice).